Consider the following 58-residue polypeptide: Parvalbumin beta 3 (58 aa).

Ala-1 is subject to N-acetylalanine. The EF-hand domain occupies 24–58 (FNYKTFFKFFAIIDQDHSGFIEEEELKALSDAETK). Asp-37, Asp-39, Ser-41, Phe-43, Glu-45, and Glu-48 together coordinate Ca(2+).

It belongs to the parvalbumin family.

Its function is as follows. In muscle, parvalbumin is thought to be involved in relaxation after contraction. It binds two calcium ions. This chain is Parvalbumin beta 3, found in Merluccius senegalensis (Senegalese hake).